Consider the following 192-residue polypeptide: MAAEPVEDNCISFVEMKFINNTLYFVAENGDLESDHFGKLEPKLSIIRNLNDQVLFISQGNQPVFEDMPDSDCSDNAPQTIFIIYMYKDSLTRGLAVTISVQCKKMSTLSCENKIISFKEMNPPDNIDNEGSDIIFFQRSVPGHDDKIQFESSLYKGYFLACKKENDLFKLILKRQDDNRDKSVMFTVQNQN.

The propeptide occupies 1–35 (MAAEPVEDNCISFVEMKFINNTLYFVAENGDLESD).

This sequence belongs to the IL-1 family. Forms a ternary complex with ligand-binding receptor subunit IL18R1 and signaling receptor subunit IL18RAP at the plasma membrane. Mature IL18 first binds to IL18R1 forming a low affinity binary complex, which then interacts with IL18RAP to form a high affinity ternary complex that signals inside the cell. Interacts with cargo receptor TMED10; the interaction mediates the translocation from the cytoplasm into the ERGIC (endoplasmic reticulum-Golgi intermediate compartment) and thereby secretion. The pro-IL-18 precursor is processed by CASP1, CASP4 or CASP5 to yield its mature, active form. The pro-IL-18 precursor features autoinhibitory interactions between the propeptide and the post-cleavage-site region, preventing recognition by the IL18R1 receptor. Processing by CASP1, CASP4 or CASP5 induces conformational changes to generate critical receptor-binding sites. The mature form is then secreted and released in the extracellular milieu by passing through the gasdermin-D (GSDMD) pore. In contrast, cleavage by CASP3 inactivates IL18.

It localises to the cytoplasm. The protein resides in the cytosol. It is found in the secreted. In terms of biological role, pro-inflammatory cytokine primarily involved in epithelial barrier repair, polarized T-helper 1 (Th1) cell and natural killer (NK) cell immune responses. Upon binding to IL18R1 and IL18RAP, forms a signaling ternary complex which activates NF-kappa-B, triggering synthesis of inflammatory mediators. Synergizes with IL12/interleukin-12 to induce IFNG synthesis from T-helper 1 (Th1) cells and natural killer (NK) cells. Involved in transduction of inflammation downstream of pyroptosis: its mature form is specifically released in the extracellular milieu by passing through the gasdermin-D (GSDMD) pore. This Capra hircus (Goat) protein is Interleukin-18 (IL18).